The sequence spans 450 residues: tRNA modification GTPase MnmE (450 aa).

Positions 25, 86, and 126 each coordinate (6S)-5-formyl-5,6,7,8-tetrahydrofolate. The TrmE-type G domain maps to 221-373; that stretch reads GLRVALVGRP…LVQALLERCG (153 aa). N231 lines the K(+) pocket. GTP-binding positions include 231–236, 250–256, 275–278, and 336–339; these read NVGKSS, TDLPGTT, DTAG, and NKAD. S235 is a Mg(2+) binding site. K(+)-binding residues include T250, L252, and T255. Residue T256 participates in Mg(2+) binding. Position 450 (K450) interacts with (6S)-5-formyl-5,6,7,8-tetrahydrofolate.

It belongs to the TRAFAC class TrmE-Era-EngA-EngB-Septin-like GTPase superfamily. TrmE GTPase family. As to quaternary structure, homodimer. Heterotetramer of two MnmE and two MnmG subunits. K(+) serves as cofactor.

The protein localises to the cytoplasm. Its function is as follows. Exhibits a very high intrinsic GTPase hydrolysis rate. Involved in the addition of a carboxymethylaminomethyl (cmnm) group at the wobble position (U34) of certain tRNAs, forming tRNA-cmnm(5)s(2)U34. The chain is tRNA modification GTPase MnmE from Synechococcus sp. (strain CC9605).